The chain runs to 491 residues: Ketol-acid reductoisomerase (NADP(+)) (491 aa).

One can recognise a KARI N-terminal Rossmann domain in the interval 15–208; it reads AQLGKCRFMG…GGHRAGVLES (194 aa). NADP(+) contacts are provided by residues 45 to 48, Arg-68, Arg-76, Ser-78, and 108 to 110; these read CGAQ and DKQ. Residue His-132 is part of the active site. Residue Gly-158 participates in NADP(+) binding. KARI C-terminal knotted domains are found at residues 209–344 and 345–484; these read SFVA…TAPQ and YEGK…MTDM. Mg(2+) is bound by residues Asp-217, Glu-221, Glu-389, and Glu-393. Residue Ser-414 coordinates substrate.

It belongs to the ketol-acid reductoisomerase family. Mg(2+) is required as a cofactor.

The catalysed reaction is (2R)-2,3-dihydroxy-3-methylbutanoate + NADP(+) = (2S)-2-acetolactate + NADPH + H(+). It catalyses the reaction (2R,3R)-2,3-dihydroxy-3-methylpentanoate + NADP(+) = (S)-2-ethyl-2-hydroxy-3-oxobutanoate + NADPH + H(+). Its pathway is amino-acid biosynthesis; L-isoleucine biosynthesis; L-isoleucine from 2-oxobutanoate: step 2/4. The protein operates within amino-acid biosynthesis; L-valine biosynthesis; L-valine from pyruvate: step 2/4. Functionally, involved in the biosynthesis of branched-chain amino acids (BCAA). Catalyzes an alkyl-migration followed by a ketol-acid reduction of (S)-2-acetolactate (S2AL) to yield (R)-2,3-dihydroxy-isovalerate. In the isomerase reaction, S2AL is rearranged via a Mg-dependent methyl migration to produce 3-hydroxy-3-methyl-2-ketobutyrate (HMKB). In the reductase reaction, this 2-ketoacid undergoes a metal-dependent reduction by NADPH to yield (R)-2,3-dihydroxy-isovalerate. The sequence is that of Ketol-acid reductoisomerase (NADP(+)) from Citrobacter koseri (strain ATCC BAA-895 / CDC 4225-83 / SGSC4696).